The following is a 786-amino-acid chain: Neprilysin-3 (786 aa).

Over 1–52 the chain is Cytoplasmic; it reads MTRYKQTEFTEDDSSSIGGIQLNEATGHTGMQIRYHTARATWNWRSRNKTEK. The chain crosses the membrane as a helical; Signal-anchor for type II membrane protein span at residues 53–73; it reads WLLITTFVMAITIFTLLIVLF. Residues 74–786 lie on the Extracellular side of the membrane; sequence TDGGSSDATK…MNPTEKCEVW (713 aa). One can recognise a Peptidase M13 domain in the interval 102 to 786; the sequence is PCLNKHCIFA…MNPTEKCEVW (685 aa). Intrachain disulfides connect Cys-103/Cys-108, Cys-126/Cys-771, Cys-134/Cys-731, Cys-190/Cys-450, and Cys-659/Cys-783. N-linked (GlcNAc...) asparagine glycosylation is found at Asn-216, Asn-226, Asn-256, Asn-279, Asn-305, Asn-325, Asn-356, Asn-388, Asn-496, and Asn-569. His-622 serves as a coordination point for Zn(2+). Glu-623 is a catalytic residue. His-626 and Glu-682 together coordinate Zn(2+). The active-site Proton donor is the Asp-686. N-linked (GlcNAc...) asparagine glycosylation occurs at Asn-715.

It belongs to the peptidase M13 family. It depends on Zn(2+) as a cofactor.

The protein resides in the cell membrane. The catalysed reaction is Preferential cleavage of polypeptides between hydrophobic residues, particularly with Phe or Tyr at P1'.. In terms of biological role, metalloendoprotease which is required in the dorsal paired medial neurons for the proper formation of long-term (LTM) and middle-term memories (MTM). Also required in the mushroom body neurons where it functions redundantly with neprilysins Nep2 and Nep4 in normal LTM formation. This Drosophila melanogaster (Fruit fly) protein is Neprilysin-3.